A 1260-amino-acid chain; its full sequence is Kinesin-like protein KIN-14E (1260 aa).

One can recognise a MyTH4 domain in the interval 115 to 274 (FQKDPIPTSL…PGREEIEALL (160 aa)). The FERM domain occupies 279-593 (LTTIVFFLDE…HINDVMLRRY (315 aa)). Coiled coils occupy residues 615–676 (QNFE…LLEV) and 753–853 (SKRL…TAAI). One can recognise a Kinesin motor domain in the interval 888–1209 (KIRVYCRIRP…LLYASRVRTI (322 aa)). 972 to 977 (GSGKTF) contributes to the ATP binding site. A calmodulin-binding region spans residues 1217 to 1239 (ISSKEMVRLKKLVAYWKEQAGKK). The homodimerization domain stretch occupies residues 1221 to 1260 (EMVRLKKLVAYWKEQAGKKGEEEDLVDIEEDRTRKDEADS). The tract at residues 1236-1260 (AGKKGEEEDLVDIEEDRTRKDEADS) is disordered. Residues 1251–1260 (DRTRKDEADS) show a composition bias toward basic and acidic residues.

The protein belongs to the TRAFAC class myosin-kinesin ATPase superfamily. Kinesin family. KIN-14 subfamily. In terms of assembly, homodimer (via C-terminus). Binds microtubules via its N-terminus containing the MyTH4 domain and binds F-actin via its FERM domain. Interacts with KIPK1. Interacts with KIPK2. Interacts with AN. Interacts with AIR9. Interacts (via C-terminus) with KIC, CAM2, CAM4 and CAM6. KIC and calmodulin show competitive binding to KCBP. Binding to calmodulin inhibits microtubule binding activity. Binding to KIC inhibits microtubule binding activity and microtubule-stimulated ATPase activity. In terms of tissue distribution, widely expressed with the highest levels in flowers. Strongly expressed in the root tip. Highly detected in the branch apex of the trichome.

It is found in the cytoplasm. The protein localises to the cell cortex. The protein resides in the cytoskeleton. Its subcellular location is the spindle. It localises to the phragmoplast. Functionally, minus-end microtubule-dependent motor protein involved in the regulation of cell division and trichome morphogenesis through microtubules bundling. Possesses basal and microtubule-stimulated ATPase activities. Acts as a hub that brings together microtubules and actin filaments to modulate the cytoskeleton during trichome formation and morphogenesis. Could be involved in the negative regulation of root growth. This chain is Kinesin-like protein KIN-14E, found in Arabidopsis thaliana (Mouse-ear cress).